We begin with the raw amino-acid sequence, 172 residues long: Large ribosomal subunit protein uL10 (172 aa).

Belongs to the universal ribosomal protein uL10 family. As to quaternary structure, part of the ribosomal stalk of the 50S ribosomal subunit. The N-terminus interacts with L11 and the large rRNA to form the base of the stalk. The C-terminus forms an elongated spine to which L12 dimers bind in a sequential fashion forming a multimeric L10(L12)X complex.

In terms of biological role, forms part of the ribosomal stalk, playing a central role in the interaction of the ribosome with GTP-bound translation factors. The protein is Large ribosomal subunit protein uL10 of Rhodopseudomonas palustris (strain HaA2).